Here is a 428-residue protein sequence, read N- to C-terminus: Cytochrome P450-terp (428 aa).

Cys-377 contributes to the heme binding site.

Belongs to the cytochrome P450 family. Heme serves as cofactor.

It is found in the cytoplasm. In terms of biological role, catalyzes the hydroxylation of alpha-terpineol. This Pseudomonas sp protein is Cytochrome P450-terp (cyp108).